Here is a 1085-residue protein sequence, read N- to C-terminus: MSFVHLHVHSPFSFLDGASRLDDLIAEAALHGMPALALTDHNNVSGAVRFQRKAQEAGIQPIQGAELTLEGGYHLTLLATGPKGYANLNRLITAAHLGQEPRATPGAMFALAPGHDRLQPACPLSALSHDTDGLIALSGCRRGEIPSLILRGRLAEAEAAARRYAAWFPGRFYLELHDERLPGEQALNRALRDLGEALGLPLVVTSNVHHRTREEFFVHDLLTCVRTLTRIDQPHPERPLNDQRYLKPPEVMIERFREFPEAVKNTLAIAERCRPVLDLDARLHPEFQTPDGSHPAAYLTHLVYDGAARRYGRITERIRRRLEHELTIITRLGYEDYFLLVWDVVRFARERGIRCAGRGSAADSAVAYCLFITDVDAIERGLLFERFMSLERAQKPDIDIDFDARRRDEVAAYVYRKYGADHVASVCTYNTFQARSAVRDLGKAMGFQEADLDYLAKRIPWHAGADEILTVMARYPELRQSGIPWHKFEQLVQAAERVARFPRFIGTHLGGLVISRRPLLEVTPLQMAAKGQVVCQFDKEYVEDLGLVKLDLLSLRTFTAVDDAVRAIGDIDYEQIPHGDAATYEMLGVGESIGVFQLESPAQRALQARLKPDRFEDIVASVAIIRPGPIKGNMVEPFLARRHGKEEVTYLHPKLKPILEKTYGVVLFQEQVIEIATAVAGFTPGEADQLRRVMTHARNREDMEAIGRLFRQKAAAAGVDPAVADTIFSYIQGYASYGFCEAHAAAFANTAYKTAYLVRHYPAEYFAALMSAQPMGYYPINTLAVEARRRGVGLLPVDINRSEEAFTVEEWSREAWEAFWGMEPFAPEYPATGKAIRIGLRAVKGVGEPAAAAILAARDGGEFRSLADLVRRTGGAVPRGPLEALVLAGAFDRLHSNRRAALWQVAHLLEAERIRQERGAGQAGLLDGDAPGLGAQAAEALEAASPQGTPAIADFGAAERYLKEYELTGLMVRTHFMRFVRERLAREGYLTAQEVRQRRAGELVKVAGLPVCPHRPPTRSGKIVVFLSLEDETGLIDLTIFEDVYQRYGHLIFTDPRPPLAALGRVDRRGGHVSITVNRLRLLDT.

The protein belongs to the DNA polymerase type-C family. DnaE2 subfamily.

The protein localises to the cytoplasm. It carries out the reaction DNA(n) + a 2'-deoxyribonucleoside 5'-triphosphate = DNA(n+1) + diphosphate. Its function is as follows. DNA polymerase involved in damage-induced mutagenesis and translesion synthesis (TLS). It is not the major replicative DNA polymerase. In Symbiobacterium thermophilum (strain DSM 24528 / JCM 14929 / IAM 14863 / T), this protein is Error-prone DNA polymerase.